We begin with the raw amino-acid sequence, 540 residues long: H(+)/hexose cotransporter 2 (540 aa).

The Cytoplasmic portion of the chain corresponds to 1–29; it reads MAGGGPVASTTTNRASQYGYARGGLNWYI. A helical transmembrane segment spans residues 30–50; that stretch reads FIVALTAGSGGLLFGYDIGVT. The Extracellular segment spans residues 51–90; sequence GGVTSMPEFLQKFFPSIYDRTQQPSDSKDPYCTYDDQKLQ. A helical transmembrane segment spans residues 91 to 111; the sequence is LFTSSFFLAGMFVSFFAGSVV. The Cytoplasmic portion of the chain corresponds to 112-124; that stretch reads RRWGRKPTMLIAS. Residues 125 to 135 traverse the membrane as a helical segment; the sequence is VLFLAGAGLNA. Residues 136–147 are Extracellular-facing; that stretch reads GAQDLAMLVIGR. The chain crosses the membrane as a helical span at residues 148–168; it reads VLLGFGVGGGNNAVPLYLSEC. Over 169 to 176 the chain is Cytoplasmic; it reads APPKYRGG. The helical transmembrane segment at 177–197 threads the bilayer; sequence LNMMFQLAVTIGIIVAQLVNY. Topologically, residues 198–207 are extracellular; the sequence is GTQTMNNGWR. Residues 208–228 traverse the membrane as a helical segment; it reads LSLGLAGVPAIILLIGSLLLP. Over 229-296 the chain is Cytoplasmic; that stretch reads ETPNSLIERG…YSPMLIVTSL (68 aa). Residues 297-317 traverse the membrane as a helical segment; the sequence is IAMLQQLTGINAIMFYVPVLF. Topologically, residues 318-326 are extracellular; the sequence is SSFGTARHA. Residues 327–337 traverse the membrane as a helical segment; it reads ALLNTVIIGAV. Residues 338–355 are Cytoplasmic-facing; sequence NVAATFVSIFSVDKFGRR. The chain crosses the membrane as a helical span at residues 356–376; the sequence is GLFLEGGIQMFIGQVVTAAVL. Over 377-396 the chain is Extracellular; that stretch reads GVELNKYGTNLPSSTAAGVL. Residues 397 to 417 form a helical membrane-spanning segment; it reads VVICVYVAAFAWSWGPLGWLV. Residues 418–435 lie on the Cytoplasmic side of the membrane; the sequence is PSEIQTLETRGAGMSMAV. A helical transmembrane segment spans residues 436-456; sequence IVNFLFSFVIGQAFLSMMCAM. The Extracellular segment spans residues 457 to 458; the sequence is RW. The chain crosses the membrane as a helical span at residues 459–479; sequence GVFLFFAGWVVIMTFFVYFCL. The Cytoplasmic portion of the chain corresponds to 480 to 540; sequence PETKGVPVET…SEDGKPASDQ (61 aa).

This sequence belongs to the major facilitator superfamily. Sugar transporter (TC 2.A.1.1) family.

It localises to the membrane. Functionally, active uptake of galactose. This Parachlorella kessleri (Green alga) protein is H(+)/hexose cotransporter 2 (HUP2).